A 284-amino-acid chain; its full sequence is ATP phosphoribosyltransferase (284 aa).

Belongs to the ATP phosphoribosyltransferase family. Long subfamily. Equilibrium between an active dimeric form, an inactive hexameric form and higher aggregates. Interconversion between the various forms is largely reversible and is influenced by the natural substrates and inhibitors of the enzyme. The cofactor is Mg(2+).

It is found in the cytoplasm. It catalyses the reaction 1-(5-phospho-beta-D-ribosyl)-ATP + diphosphate = 5-phospho-alpha-D-ribose 1-diphosphate + ATP. Its pathway is amino-acid biosynthesis; L-histidine biosynthesis; L-histidine from 5-phospho-alpha-D-ribose 1-diphosphate: step 1/9. With respect to regulation, feedback inhibited by histidine. Its function is as follows. Catalyzes the condensation of ATP and 5-phosphoribose 1-diphosphate to form N'-(5'-phosphoribosyl)-ATP (PR-ATP). Has a crucial role in the pathway because the rate of histidine biosynthesis seems to be controlled primarily by regulation of HisG enzymatic activity. This chain is ATP phosphoribosyltransferase (hisG), found in Mycobacterium bovis (strain ATCC BAA-935 / AF2122/97).